The following is a 320-amino-acid chain: Ribose-phosphate pyrophosphokinase 1 (320 aa).

ATP contacts are provided by residues 39-41 and 98-99; these read DGE and RQ. Mg(2+)-binding residues include His132 and Asp173. The active site involves Lys196. Residues Arg198, Asp224, and 228–232 contribute to the D-ribose 5-phosphate site; that span reads DTAGT.

Belongs to the ribose-phosphate pyrophosphokinase family. Class I subfamily. Homohexamer. Mg(2+) is required as a cofactor.

It is found in the cytoplasm. The catalysed reaction is D-ribose 5-phosphate + ATP = 5-phospho-alpha-D-ribose 1-diphosphate + AMP + H(+). It participates in metabolic intermediate biosynthesis; 5-phospho-alpha-D-ribose 1-diphosphate biosynthesis; 5-phospho-alpha-D-ribose 1-diphosphate from D-ribose 5-phosphate (route I): step 1/1. In terms of biological role, involved in the biosynthesis of the central metabolite phospho-alpha-D-ribosyl-1-pyrophosphate (PRPP) via the transfer of pyrophosphoryl group from ATP to 1-hydroxyl of ribose-5-phosphate (Rib-5-P). This Streptococcus pyogenes serotype M1 protein is Ribose-phosphate pyrophosphokinase 1.